Here is a 550-residue protein sequence, read N- to C-terminus: Glucose-6-phosphate isomerase 1 (550 aa).

Glu358 functions as the Proton donor in the catalytic mechanism. Catalysis depends on residues His389 and Lys513.

This sequence belongs to the GPI family.

Its subcellular location is the cytoplasm. It catalyses the reaction alpha-D-glucose 6-phosphate = beta-D-fructose 6-phosphate. It participates in carbohydrate biosynthesis; gluconeogenesis. The protein operates within carbohydrate degradation; glycolysis; D-glyceraldehyde 3-phosphate and glycerone phosphate from D-glucose: step 2/4. Its function is as follows. Catalyzes the reversible isomerization of glucose-6-phosphate to fructose-6-phosphate. This chain is Glucose-6-phosphate isomerase 1, found in Streptomyces coelicolor (strain ATCC BAA-471 / A3(2) / M145).